A 227-amino-acid polypeptide reads, in one-letter code: Cytidylate kinase (227 aa).

Residue 12 to 20 (GPSGAGKGT) participates in ATP binding.

It belongs to the cytidylate kinase family. Type 1 subfamily.

It localises to the cytoplasm. It catalyses the reaction CMP + ATP = CDP + ADP. It carries out the reaction dCMP + ATP = dCDP + ADP. This is Cytidylate kinase from Salmonella paratyphi A (strain ATCC 9150 / SARB42).